The primary structure comprises 257 residues: Snake venom serine protease salmonase (257 aa).

The N-terminal stretch at 1–18 (MVLIRVLVNFLILQLSYA) is a signal peptide. Residues 19-24 (QKSSEL) constitute a propeptide that is removed on maturation. A Peptidase S1 domain is found at 25–248 (VIGGDECNIN…YIDWIQSIIA (224 aa)). 5 cysteine pairs are disulfide-bonded: Cys31–Cys162, Cys49–Cys65, Cys141–Cys209, Cys173–Cys188, and Cys199–Cys224. His64 (charge relay system) is an active-site residue. The N-linked (GlcNAc...) asparagine glycan is linked to Asn78. The active-site Charge relay system is the Asp109. Catalysis depends on Ser203, which acts as the Charge relay system.

It belongs to the peptidase S1 family. Snake venom subfamily. In terms of assembly, monomer. Expressed by the venom gland.

Its subcellular location is the secreted. Its function is as follows. Snake venom serine protease that may act in the hemostasis system of the prey. This chain is Snake venom serine protease salmonase, found in Gloydius brevicauda (Korean slamosa snake).